The following is a 460-amino-acid chain: tRNA modification GTPase MnmE (460 aa).

(6S)-5-formyl-5,6,7,8-tetrahydrofolate contacts are provided by Arg29, Glu91, and Lys132. One can recognise a TrmE-type G domain in the interval 227–383 (GISIALIGKT…LIDTIIKKCG (157 aa)). Residue Asn237 coordinates K(+). GTP is bound by residues 237 to 242 (NVGKSS), 256 to 262 (TNIPGTT), and 281 to 284 (DTAG). Position 241 (Ser241) interacts with Mg(2+). 3 residues coordinate K(+): Thr256, Ile258, and Thr261. Thr262 is a Mg(2+) binding site. A (6S)-5-formyl-5,6,7,8-tetrahydrofolate-binding site is contributed by Lys460.

Belongs to the TRAFAC class TrmE-Era-EngA-EngB-Septin-like GTPase superfamily. TrmE GTPase family. As to quaternary structure, homodimer. Heterotetramer of two MnmE and two MnmG subunits. The cofactor is K(+).

The protein localises to the cytoplasm. Functionally, exhibits a very high intrinsic GTPase hydrolysis rate. Involved in the addition of a carboxymethylaminomethyl (cmnm) group at the wobble position (U34) of certain tRNAs, forming tRNA-cmnm(5)s(2)U34. The protein is tRNA modification GTPase MnmE of Prochlorococcus marinus (strain MIT 9312).